Here is a 339-residue protein sequence, read N- to C-terminus: 4-hydroxy-2-oxovalerate aldolase 3 (339 aa).

The Pyruvate carboxyltransferase domain maps to 7-259 (IRVTDTSLRD…KTGIDFFAIA (253 aa)). 15 to 16 (RD) contributes to the substrate binding site. Asp-16 is a binding site for Mn(2+). His-19 (proton acceptor) is an active-site residue. Ser-169 and His-198 together coordinate substrate. Mn(2+)-binding residues include His-198 and His-200. Residue Tyr-289 participates in substrate binding.

It belongs to the 4-hydroxy-2-oxovalerate aldolase family.

The enzyme catalyses (S)-4-hydroxy-2-oxopentanoate = acetaldehyde + pyruvate. The chain is 4-hydroxy-2-oxovalerate aldolase 3 (hsaF) from Rhodococcus jostii (strain RHA1).